A 1339-amino-acid chain; its full sequence is Astrotactin-2 (1339 aa).

The first 49 residues, 1–49 (MAAAGARLSPGPGSGLRGRPRLCFHPGPPPLLPLLLLFLLLLPPPPLLA), serve as a signal peptide directing secretion. At 50-206 (GATAAASREP…IVEEQMHILH (157 aa)) the chain is on the lumenal side. Residue asparagine 168 is glycosylated (N-linked (GlcNAc...) asparagine). Residues 207-227 (ISVMGGLIALLLLLLVFTVAL) form a helical membrane-spanning segment. At 228-434 (YAQRRWQKRR…KGLLKSPVNK (207 aa)) the chain is on the cytoplasmic side. 2 disordered regions span residues 296 to 316 (EEDE…EFGS) and 363 to 408 (TPIE…ADDE). A helical transmembrane segment spans residues 435-455 (TALTLIAVSSCILAMVCGSQM). Residues 456 to 1339 (SCPLTVKVTL…RNTYGESKGR (884 aa)) lie on the Lumenal side of the membrane. EGF-like domains are found at residues 510–550 (VRDL…HLCV), 651–695 (PVRD…SGCY), and 699–751 (KGID…KSCL). 9 disulfides stabilise this stretch: cysteine 514–cysteine 526, cysteine 522–cysteine 533, cysteine 535–cysteine 549, cysteine 655–cysteine 668, cysteine 662–cysteine 679, cysteine 681–cysteine 694, cysteine 703–cysteine 715, cysteine 711–cysteine 735, and cysteine 737–cysteine 750. N-linked (GlcNAc...) asparagine glycosylation is found at asparagine 770 and asparagine 783. Intrachain disulfides connect cysteine 825–cysteine 987, cysteine 916–cysteine 977, and cysteine 983–cysteine 990. Asparagine 1020 carries an N-linked (GlcNAc...) asparagine glycan. Cystine bridges form between cysteine 1036–cysteine 1047, cysteine 1049–cysteine 1062, cysteine 1136–cysteine 1158, cysteine 1190–cysteine 1277, and cysteine 1298–cysteine 1321. The Fibronectin type-III domain maps to 1065–1188 (LLQPVLRLSP…SELSTVTLRT (124 aa)).

The protein belongs to the astrotactin family. In terms of assembly, interacts with ASTN1; the interaction is not calcium-dependent.

The protein localises to the membrane. Its subcellular location is the perikaryon. The protein resides in the cytoplasm. It localises to the cell cortex. It is found in the early endosome. The protein localises to the late endosome. Its subcellular location is the cytoplasmic vesicle. The protein resides in the clathrin-coated vesicle. Mediates recycling of the neuronal cell adhesion molecule ASTN1 to the anterior pole of the cell membrane in migrating neurons. Promotes ASTN1 internalization and intracellular transport of endocytosed ASTN1. Selectively binds inositol-4,5-bisphosphate, inositol-3,4,5-trisphosphate and inositol-1,3,4,5-tetrakisphosphate, suggesting it is recruited to membranes that contain lipids with a phosphoinositide headgroup. The polypeptide is Astrotactin-2 (ASTN2) (Homo sapiens (Human)).